A 539-amino-acid chain; its full sequence is uncharacterized protein (539 aa).

It belongs to the transposase 25 family.

This is an uncharacterized protein from Sinorhizobium fredii (strain NBRC 101917 / NGR234).